We begin with the raw amino-acid sequence, 373 residues long: Diels-Alderase (373 aa).

This sequence belongs to the Diels-Alderase family.

The enzyme catalyses (5S)-3-[(2E,6R,8E,10E,12E)-2,6-dimethyltetradeca-2,8,10,12-tetraenoyl]-5-(hydroxymethyl)pyrrolidine-2,4-dione = trichosetin. Its pathway is mycotoxin biosynthesis. In terms of biological role, hybrid PKS-NRPS synthetase; part of the gene cluster that mediates the biosynthesis of trichosetin, a trans-fused decalin-containing tetramic acid with antimicrobial activity. The PKS module of PKS-NRPS1 together with the enoylreductase (ER) catalyze the formation of the polyketide unit which is then conjugated to L-serine by the condensation domain of the PKS-NRPS1 NRPS module. Activity of the Dieckmann cyclase domain (RED) results in release of the Dieckmann product intermediate. Diels-Alderase (DA) is involved in endo-selective Diels-Alder cycloaddition to form the decalin ring, leading to the production of N-desmethylequisetin also called trichosetin. The cluster does not contain the equisetin N-methyltransferase and consequently, trichosetin is isolated as final product. This is Diels-Alderase from Gibberella fujikuroi (strain CBS 195.34 / IMI 58289 / NRRL A-6831) (Bakanae and foot rot disease fungus).